The following is a 227-amino-acid chain: Endo-1,4-beta-xylanase 1 (227 aa).

Positions 1–19 are cleaved as a signal peptide; it reads MVSLKSVLAAATAVSSAIA. Positions 37–225 constitute a GH11 domain; the sequence is QVTPNAEGWH…SSGESDIYVQ (189 aa). E121 serves as the catalytic Nucleophile. The active-site Proton donor is E212.

The protein belongs to the glycosyl hydrolase 11 (cellulase G) family.

The catalysed reaction is Endohydrolysis of (1-&gt;4)-beta-D-xylosidic linkages in xylans.. The protein operates within glycan degradation; xylan degradation. The sequence is that of Endo-1,4-beta-xylanase 1 from Humicola insolens (Soft-rot fungus).